A 241-amino-acid polypeptide reads, in one-letter code: Putative CRISPR-associated endoribonuclease-like protein Cas6 (241 aa).

Belongs to the CRISPR-associated protein Cas6/Cse3/CasE family. In terms of assembly, binds crRNA.

In terms of biological role, CRISPR (clustered regularly interspaced short palindromic repeat), is an adaptive immune system that provides protection against mobile genetic elements (viruses, transposable elements and conjugative plasmids). CRISPR clusters contain sequences complementary to antecedent mobile elements and target invading nucleic acids. CRISPR clusters are transcribed and processed into CRISPR RNA (crRNA), also called psiRNA (prokaryotic silencing) in this organism (Potential). The chain is Putative CRISPR-associated endoribonuclease-like protein Cas6 (cas6b) from Pyrococcus furiosus (strain ATCC 43587 / DSM 3638 / JCM 8422 / Vc1).